We begin with the raw amino-acid sequence, 276 residues long: Probable NADH-ubiquinone oxidoreductase 30.4 kDa subunit, mitochondrial (276 aa).

The interval 248–276 (EPVGEGKDFTPESFKLPTPQPEPEQEEKK) is disordered.

This sequence belongs to the complex I 30 kDa subunit family. Complex I is composed of about 30 different subunits. This is a component of the iron-sulfur protein fraction.

Its subcellular location is the mitochondrion inner membrane. It catalyses the reaction a ubiquinone + NADH + 5 H(+)(in) = a ubiquinol + NAD(+) + 4 H(+)(out). Functionally, core subunit of the mitochondrial membrane respiratory chain NADH dehydrogenase (Complex I) that is believed to belong to the minimal assembly required for catalysis. Complex I functions in the transfer of electrons from NADH to the respiratory chain. The immediate electron acceptor for the enzyme is believed to be ubiquinone. Essential for N-alkane assimilation. This is Probable NADH-ubiquinone oxidoreductase 30.4 kDa subunit, mitochondrial (ALI1) from Candida maltosa (Yeast).